The chain runs to 459 residues: FAD-dependent monooxygenase nanF (459 aa).

Positions 49, 62, and 121 each coordinate FAD. Active-site residues include arginine 200 and tyrosine 230. FAD-binding residues include aspartate 327 and glycine 340.

The protein belongs to the paxM FAD-dependent monooxygenase family. FAD serves as cofactor.

The protein operates within secondary metabolite biosynthesis. In terms of biological role, FAD-dependent monooxygenase; part of the gene cluster that mediates the biosynthesis of the benzazepine alkaloid nanangelenin A which contains an unprecedented 3,4-dihydro-1-benzazepine-2,5-dione-N-prenyl-N-acetoxy-anthranilamide scaffold. The first step of nanangelenin biosynthesis is catalyzed by the indoleamine 2,3-dioxygenase nanC which produces N-formyl-kynurenine through the catabolism of tryptophan. The two-module NRPS nanA then utilizes anthranilate (Ant) and L-kynurenine (L-Kyn) to assemble the dipeptide product nanangelenin B. The first adenylation domain of nanA (A1) loads anthranilate onto the T1 domain, while A2 loads kynurenine, generated through spontaneous nonenzymatic deformylation of the nanC-supplied N-formyl-kynurenine. The peptide bond formation between the tethered amino acids is catalyzed by the first condensation domain (C1) between anthranilate's carbonyl carbon and kynurenine's aliphatic primary amine. The second C domain (C2) catalyzes the final cyclization event between the aromatic amine of kynurenine and the tethered carbonyl carbon, yielding nanangelenin B. The terminal T3 domain enhances the catalytic efficiency of C2, suggesting the T2-tethered Ant-L-Kyn is transferred to T3 prior to cyclization by C2. Once released from nanA, nanangelenin B is then prenylated by the prenyltransferase nanD to form nanangelenin C. Nanangelenin C is then N-hydroxylated by the FAD-dependent monooxygenase nanF and further acetylated by the acetyltransferase nanB to yield nanangelenin F. Finally, the N-methyltransferase nanE methylates the amide nitrogen of 1-benzazepine to convert nanangelenin F into nanangelenin A. NanE is also able to methylate most of the intermediates of the pathway such as nanangelenin B and nanangelenin C to produce nanangelenin D and nanangelenin E, respectively. The chain is FAD-dependent monooxygenase nanF from Aspergillus nanangensis.